We begin with the raw amino-acid sequence, 110 residues long: Large ribosomal subunit protein uL22 (110 aa).

Belongs to the universal ribosomal protein uL22 family. Part of the 50S ribosomal subunit.

This protein binds specifically to 23S rRNA; its binding is stimulated by other ribosomal proteins, e.g. L4, L17, and L20. It is important during the early stages of 50S assembly. It makes multiple contacts with different domains of the 23S rRNA in the assembled 50S subunit and ribosome. Functionally, the globular domain of the protein is located near the polypeptide exit tunnel on the outside of the subunit, while an extended beta-hairpin is found that lines the wall of the exit tunnel in the center of the 70S ribosome. The polypeptide is Large ribosomal subunit protein uL22 (Baumannia cicadellinicola subsp. Homalodisca coagulata).